A 153-amino-acid polypeptide reads, in one-letter code: Nucleoside diphosphate kinase (153 aa).

Alanine 2 bears the N-acetylalanine mark. ATP-binding residues include lysine 13, phenylalanine 61, arginine 89, threonine 95, arginine 106, and asparagine 116. Catalysis depends on histidine 119, which acts as the Pros-phosphohistidine intermediate. Serine 126 carries the post-translational modification Phosphoserine.

It belongs to the NDK family. In terms of assembly, homohexamer. Requires Mg(2+) as cofactor.

The protein resides in the cytoplasm. The protein localises to the cytoskeleton. The enzyme catalyses a 2'-deoxyribonucleoside 5'-diphosphate + ATP = a 2'-deoxyribonucleoside 5'-triphosphate + ADP. It catalyses the reaction a ribonucleoside 5'-diphosphate + ATP = a ribonucleoside 5'-triphosphate + ADP. Functionally, major role in the synthesis of nucleoside triphosphates other than ATP. The ATP gamma phosphate is transferred to the NDP beta phosphate via a ping-pong mechanism, using a phosphorylated active-site intermediate. The protein is Nucleoside diphosphate kinase (awd) of Drosophila melanogaster (Fruit fly).